The sequence spans 308 residues: MMKLDEIIETLRQGKHVDEDSIYSLCVMAQELLMNESNVTHVDTPVTICGDIHGQLHDLLTLFAKSGGIEKNRYIFLGDFVDRGFYSLESFLLLVCYKLRYPDRIVLIRGNHETRQITKVYGFYDEVVRKYGNSNVWRYCCEVFDYLPLGAIVNNKVFCVHGGLSPDVLSINEIRTIDRKKEVPHEGAMCDLLWSDPEDVDTWSLSPRGAGFLFGQNEVDKFLHTNSVELIARAHQLVMEGYKEMFDGGLVTVWSAPNYCYRCGNVAAVLRIDDDMTKDYTIFEAVQARDSGGNVILPTKKPQMDYFL.

Positions 51, 53, 79, and 111 each coordinate Mn(2+). Residue histidine 112 is the Proton donor of the active site. Residues histidine 161 and histidine 235 each coordinate Mn(2+). Leucine 308 is modified (leucine methyl ester).

The protein belongs to the PPP phosphatase family. PP-4 (PP-X) subfamily. In terms of assembly, catalytic subunit of the histone H2A phosphatase complex (HTP-C) containing PPH3, PSY2 and PSY4. It depends on Mn(2+) as a cofactor.

The protein resides in the cytoplasm. It is found in the nucleus. The enzyme catalyses O-phospho-L-seryl-[protein] + H2O = L-seryl-[protein] + phosphate. The catalysed reaction is O-phospho-L-threonyl-[protein] + H2O = L-threonyl-[protein] + phosphate. Functionally, forms the histone H2A phosphatase complex in association with the regulatory subunits PSY2 and PSY4, which dephosphorylates H2AS128ph (gamma-H2A) that has been displaced from sites of DNA lesions in the double-stranded DNA break repair process. Dephosphorylation is necessary for efficient recovery from the DNA damage checkpoint. In Kluyveromyces lactis (strain ATCC 8585 / CBS 2359 / DSM 70799 / NBRC 1267 / NRRL Y-1140 / WM37) (Yeast), this protein is Serine/threonine-protein phosphatase 4 catalytic subunit (PPH3).